A 733-amino-acid polypeptide reads, in one-letter code: Polyribonucleotide nucleotidyltransferase (733 aa).

Positions 489 and 495 each coordinate Mg(2+). The region spanning 556–615 (PKIDTIKIDVDKIKIVIGKGGETIDKIIAETGVKIDIDEEGNVSIYSSDQDAINRAKEII) is the KH domain. Residues 625–693 (DEVYHAKVVR…AKGRVDASMK (69 aa)) enclose the S1 motif domain. The interval 691–733 (SMKVLLPRPPKSDKPKHHHDKGHHPHKEYKGHKDHQESPKTEE) is disordered. Over residues 704–723 (KPKHHHDKGHHPHKEYKGHK) the composition is skewed to basic residues. Positions 724–733 (DHQESPKTEE) are enriched in basic and acidic residues.

This sequence belongs to the polyribonucleotide nucleotidyltransferase family. Mg(2+) serves as cofactor.

The protein resides in the cytoplasm. The catalysed reaction is RNA(n+1) + phosphate = RNA(n) + a ribonucleoside 5'-diphosphate. Involved in mRNA degradation. Catalyzes the phosphorolysis of single-stranded polyribonucleotides processively in the 3'- to 5'-direction. The protein is Polyribonucleotide nucleotidyltransferase of Streptococcus sanguinis (strain SK36).